We begin with the raw amino-acid sequence, 576 residues long: Adenine deaminase (576 aa).

This sequence belongs to the metallo-dependent hydrolases superfamily. Adenine deaminase family. It depends on Mn(2+) as a cofactor.

The enzyme catalyses adenine + H2O + H(+) = hypoxanthine + NH4(+). This is Adenine deaminase from Bacillus pumilus (strain SAFR-032).